A 168-amino-acid chain; its full sequence is Secreted RxLR effector protein RXLR-C06 (168 aa).

An N-terminal signal peptide occupies residues 1–22 (MRIQLLWLSFAVLSTILSTCDA). The interval 25-52 (DKLDPQRVQPNQNGSGHNQSIRSALKTS) is disordered. Positions 32–50 (VQPNQNGSGHNQSIRSALK) are enriched in polar residues. 2 N-linked (GlcNAc...) asparagine glycosylation sites follow: Asn-37 and Asn-42. Residues 46-63 (RSALKTSHGKTIADDEER) carry the RxLR-dEER motif. The IQ domain maps to 78-107 (YKAIVAKLSKYFRDYHERREIRKQRILNKS). Asn-105 carries an N-linked (GlcNAc...) asparagine glycan.

Belongs to the RxLR effector family.

The protein localises to the secreted. It localises to the host Golgi apparatus. Secreted effector that suppresses pattern-triggered immunity (PTI) in plant host. The protein is Secreted RxLR effector protein RXLR-C06 of Plasmopara halstedii (Downy mildew of sunflower).